The sequence spans 129 residues: Probable tautomerase YrdN (129 aa).

P2 serves as the catalytic Proton acceptor; via imino nitrogen.

The protein belongs to the 4-oxalocrotonate tautomerase family.

Putative target of GltR. The polypeptide is Probable tautomerase YrdN (yrdN) (Bacillus subtilis (strain 168)).